Reading from the N-terminus, the 920-residue chain is 2-oxoadipate dehydrogenase complex component E1 (920 aa).

N6-succinyllysine is present on residues K183 and K188. The tract at residues 299–318 is disordered; sequence GKTRGRQQSQEDGDYSPNGS. An N6-succinyllysine mark is found at K800 and K818.

It belongs to the alpha-ketoglutarate dehydrogenase family. The 2-oxoadipate dehydrogenase complex is composed of OADH (2-oxoadipate dehydrogenase; E1a), DLST (dihydrolipoamide succinyltransferase; E2) and DLD (dihydrolipoamide dehydrogenase; E3). E1a functional unit is a dimer. The cofactor is thiamine diphosphate.

Its subcellular location is the mitochondrion. The catalysed reaction is N(6)-[(R)-lipoyl]-L-lysyl-[protein] + 2-oxoadipate + H(+) = N(6)-[(R)-S(8)-glutaryldihydrolipoyl]-L-lysyl-[protein] + CO2. The protein operates within amino-acid degradation. In terms of biological role, 2-oxoadipate dehydrogenase (E1a) component of the 2-oxoadipate dehydrogenase complex (OADHC). Participates in the first step, rate limiting for the overall conversion of 2-oxoadipate (alpha-ketoadipate) to glutaryl-CoA and CO(2) catalyzed by the whole OADHC. Catalyzes the irreversible decarboxylation of 2-oxoadipate via the thiamine diphosphate (ThDP) cofactor and subsequent transfer of the decarboxylated acyl intermediate on an oxidized dihydrolipoyl group that is covalently amidated to the E2 enzyme (dihydrolipoyllysine-residue succinyltransferase or DLST). Can catalyze the decarboxylation of 2-oxoglutarate in vitro, but at a much lower rate than 2-oxoadipate. Responsible for the last step of L-lysine, L-hydroxylysine and L-tryptophan catabolism with the common product being 2-oxoadipate. This Rattus norvegicus (Rat) protein is 2-oxoadipate dehydrogenase complex component E1 (Dhtkd1).